The chain runs to 65 residues: MIALSVCWQIVRYLCRIRQMXGLNAIEHSNYLRNYMGHLRQKLEQDPARPRHFITETGIGYRFML.

A DNA-binding region (ompR/PhoB-type) is located at residues 1 to 65 (MIALSVCWQI…ETGIGYRFML (65 aa)).

This is an uncharacterized protein from Escherichia coli (strain K12).